A 225-amino-acid polypeptide reads, in one-letter code: Claudin-8 (225 aa).

The Cytoplasmic segment spans residues 1–7; sequence MATYALQ. The helical transmembrane segment at 8 to 28 threads the bilayer; that stretch reads MAALVLGGVGMVGTVAVTIMP. Residues 29–81 are Extracellular-facing; sequence QWRVSAFIESNIVVFENRWEGLWMNCMRHANIRMQCKVYDSLLALSPDLQASR. A helical membrane pass occupies residues 82 to 102; the sequence is GLMCAASVLAFLAFMTAILGM. At 103–117 the chain is on the cytoplasmic side; sequence KCTRCTGDDENVKSR. The helical transmembrane segment at 118–138 threads the bilayer; it reads ILLTAGIIFFITGLVVLIPVS. Over 139–166 the chain is Extracellular; that stretch reads WVANSIIRDFYNPLVDVALKRELGEALY. A helical transmembrane segment spans residues 167 to 187; the sequence is IGWTTALVLIAGGALFCCVFC. At 188–225 the chain is on the cytoplasmic side; that stretch reads CTERSNSYRYSVPSHRTTQRSFHAEKRSPSIYSKSQYV. A Glycyl lysine isopeptide (Lys-Gly) (interchain with G-Cter in ubiquitin) cross-link involves residue Lys-213. The interval 224–225 is interactions with TJP1, TJP2 and TJP3; sequence YV.

The protein belongs to the claudin family. Can form heteropolymeric strands with other claudins. Interacts with CLDN4. Directly interacts with TJP1/ZO-1, TJP2/ZO-2 and TJP3/ZO-3. Interacts with KLHL3. In terms of processing, ubiquitinated by the BCR(KLHL3) E3 ubiquitin ligase complex in the kidney, leading to its degradation. Expressed primarily in lung and kidney. Present in both cortical and medullar collecting ducts (at protein level).

Its subcellular location is the cell junction. The protein resides in the tight junction. It localises to the cell membrane. The enzyme catalyses chloride(in) = chloride(out). The catalysed reaction is bromide(in) = bromide(out). It catalyses the reaction iodide(out) = iodide(in). It carries out the reaction fluoride(in) = fluoride(out). In terms of biological role, can associate with other claudins to regulate tight junction structural and functional strand dynamics. May coassemble with CLDN4 into tight junction strands containing anion-selective channels that convey paracellular chloride permeability in renal collecting ducts. Cannot form tight junction strands on its own. This chain is Claudin-8, found in Mus musculus (Mouse).